Here is a 264-residue protein sequence, read N- to C-terminus: Catechol O-methyltransferase B (264 aa).

Positions M1–Q29 are cleaved as a signal peptide. A glycan (N-linked (GlcNAc...) asparagine) is linked at N31. S-adenosyl-L-methionine contacts are provided by V92, S122, E140, and D191. D191 is a binding site for Mg(2+). Residue K194 coordinates substrate. The Mg(2+) site is built by D219 and N220. Residues N220 and E249 each contribute to the substrate site.

The protein belongs to the class I-like SAM-binding methyltransferase superfamily. Cation-dependent O-methyltransferase family. Requires Mg(2+) as cofactor. As to expression, strongly expressed in eye, diencephalon, spinal cord, hindbrain, liver, kidney and telencephalon. Also detected at very low levels in muscle, spleen, anterior gut and heart. In eye, expressed strongly in retina. In brain, expressed in the central part of the telencephalon, the periventricular gray zone of the optic tectum, the periglomerular nucleus, the olfactory bulb, and the region adjacent to the diencephalic ventricle in the hypothalamus. Expressed in gill, with strongest expression in gill filaments nearest the gill arch, and in esophageal epithelium.

It localises to the secreted. The enzyme catalyses a catechol + S-adenosyl-L-methionine = a guaiacol + S-adenosyl-L-homocysteine + H(+). Catalyzes the O-methylation, and thereby the inactivation, of catecholamine neurotransmitters and catechol hormones. This chain is Catechol O-methyltransferase B, found in Danio rerio (Zebrafish).